The chain runs to 282 residues: Ribosomal RNA small subunit methyltransferase A (282 aa).

Residues histidine 15, leucine 17, glycine 42, glutamate 64, aspartate 89, and asparagine 109 each coordinate S-adenosyl-L-methionine.

Belongs to the class I-like SAM-binding methyltransferase superfamily. rRNA adenine N(6)-methyltransferase family. RsmA subfamily.

It localises to the cytoplasm. The enzyme catalyses adenosine(1518)/adenosine(1519) in 16S rRNA + 4 S-adenosyl-L-methionine = N(6)-dimethyladenosine(1518)/N(6)-dimethyladenosine(1519) in 16S rRNA + 4 S-adenosyl-L-homocysteine + 4 H(+). In terms of biological role, specifically dimethylates two adjacent adenosines (A1518 and A1519) in the loop of a conserved hairpin near the 3'-end of 16S rRNA in the 30S particle. May play a critical role in biogenesis of 30S subunits. The protein is Ribosomal RNA small subunit methyltransferase A of Prochlorococcus marinus (strain MIT 9211).